A 251-amino-acid chain; its full sequence is Aliphatic sulfonates import ATP-binding protein SsuB (251 aa).

Positions 3–231 (VSIDGVSKYF…PRSKTSESFQ (229 aa)) constitute an ABC transporter domain. Position 39–46 (39–46 (GPSGCGKS)) interacts with ATP.

The protein belongs to the ABC transporter superfamily. Aliphatic sulfonates importer (TC 3.A.1.17.2) family. As to quaternary structure, the complex is composed of two ATP-binding proteins (SsuB), two transmembrane proteins (SsuC) and a solute-binding protein (SsuA).

The protein localises to the cell membrane. It carries out the reaction ATP + H2O + aliphatic sulfonate-[sulfonate-binding protein]Side 1 = ADP + phosphate + aliphatic sulfonateSide 2 + [sulfonate-binding protein]Side 1.. Its function is as follows. Part of the ABC transporter complex SsuABC involved in aliphatic sulfonates import. Responsible for energy coupling to the transport system. The chain is Aliphatic sulfonates import ATP-binding protein SsuB from Bacillus cereus (strain ATCC 10987 / NRS 248).